A 299-amino-acid polypeptide reads, in one-letter code: tRNA pseudouridine synthase B (299 aa).

Aspartate 47 (nucleophile) is an active-site residue.

This sequence belongs to the pseudouridine synthase TruB family. Type 1 subfamily.

It catalyses the reaction uridine(55) in tRNA = pseudouridine(55) in tRNA. Responsible for synthesis of pseudouridine from uracil-55 in the psi GC loop of transfer RNAs. The chain is tRNA pseudouridine synthase B from Dechloromonas aromatica (strain RCB).